The sequence spans 233 residues: Lipoprotein-releasing system ATP-binding protein LolD (233 aa).

An ABC transporter domain is found at 6-233; sequence LQCDNLCKRY…TAELSLMGAE (228 aa). Residue 42–49 participates in ATP binding; the sequence is GSSGSGKS.

This sequence belongs to the ABC transporter superfamily. Lipoprotein translocase (TC 3.A.1.125) family. As to quaternary structure, the complex is composed of two ATP-binding proteins (LolD) and two transmembrane proteins (LolC and LolE).

It localises to the cell inner membrane. Functionally, part of the ABC transporter complex LolCDE involved in the translocation of mature outer membrane-directed lipoproteins, from the inner membrane to the periplasmic chaperone, LolA. Responsible for the formation of the LolA-lipoprotein complex in an ATP-dependent manner. The polypeptide is Lipoprotein-releasing system ATP-binding protein LolD (Escherichia coli O6:K15:H31 (strain 536 / UPEC)).